Consider the following 273-residue polypeptide: Large ribosomal subunit protein uL2 (273 aa).

Residues 228–273 (VDHPHGGGEGKTSGGRHPVTPWGFPTKGKKTRKNKRTSKFIVKKRK) are disordered. Residues 254–273 (KGKKTRKNKRTSKFIVKKRK) show a composition bias toward basic residues.

The protein belongs to the universal ribosomal protein uL2 family. In terms of assembly, part of the 50S ribosomal subunit. Forms a bridge to the 30S subunit in the 70S ribosome.

One of the primary rRNA binding proteins. Required for association of the 30S and 50S subunits to form the 70S ribosome, for tRNA binding and peptide bond formation. It has been suggested to have peptidyltransferase activity; this is somewhat controversial. Makes several contacts with the 16S rRNA in the 70S ribosome. This chain is Large ribosomal subunit protein uL2, found in Rickettsia africae (strain ESF-5).